Here is a 152-residue protein sequence, read N- to C-terminus: uncharacterized protein (152 aa).

The chain crosses the membrane as a helical span at residues 7–27; it reads TLSVIVFLISLIIIFGIYFSS.

It localises to the membrane. This is an uncharacterized protein from Methanocaldococcus jannaschii (strain ATCC 43067 / DSM 2661 / JAL-1 / JCM 10045 / NBRC 100440) (Methanococcus jannaschii).